The chain runs to 156 residues: Protein E6 (156 aa).

Zinc fingers lie at residues 40–76 and 113–149; these read CNFCGRFLDYLEVCEFDYKKLTLIWKDYSVYACCRLC and CHTCLSFLDIIEKLDSCGRGLPFHKVRNAWKGVCRQC.

This sequence belongs to the papillomaviridae E6 protein family. In terms of assembly, forms homodimers. Interacts with ubiquitin-protein ligase UBE3A/E6-AP; this interaction stimulates UBE3A ubiquitin activity. Interacts with host BAK1.

It is found in the host cytoplasm. It localises to the host nucleus. Its function is as follows. Plays a major role in the induction and maintenance of cellular transformation. E6 associates with host UBE3A/E6-AP ubiquitin-protein ligase and modulates its activity. Protects host keratinocytes from apoptosis by mediating the degradation of host BAK1. May also inhibit host immune response. The protein is Protein E6 of Homo sapiens (Human).